Reading from the N-terminus, the 268-residue chain is Tryptophan synthase alpha chain (268 aa).

Active-site proton acceptor residues include glutamate 49 and aspartate 60.

The protein belongs to the TrpA family. As to quaternary structure, tetramer of two alpha and two beta chains.

The catalysed reaction is (1S,2R)-1-C-(indol-3-yl)glycerol 3-phosphate + L-serine = D-glyceraldehyde 3-phosphate + L-tryptophan + H2O. Its pathway is amino-acid biosynthesis; L-tryptophan biosynthesis; L-tryptophan from chorismate: step 5/5. In terms of biological role, the alpha subunit is responsible for the aldol cleavage of indoleglycerol phosphate to indole and glyceraldehyde 3-phosphate. This Escherichia coli O1:K1 / APEC protein is Tryptophan synthase alpha chain.